Reading from the N-terminus, the 508-residue chain is Anthranilate synthase component 1 (508 aa).

L-tryptophan contacts are provided by residues Ser49 and 282-284 (PYM). 317-318 (GT) is a chorismate binding site. Glu344 is a binding site for Mg(2+). Chorismate is bound by residues Tyr432, Arg452, 466–468 (GAG), and Gly468. Glu481 contacts Mg(2+).

The protein belongs to the anthranilate synthase component I family. As to quaternary structure, heterotetramer consisting of two non-identical subunits: a beta subunit (TrpG) and a large alpha subunit (TrpE). It depends on Mg(2+) as a cofactor.

The enzyme catalyses chorismate + L-glutamine = anthranilate + pyruvate + L-glutamate + H(+). It functions in the pathway amino-acid biosynthesis; L-tryptophan biosynthesis; L-tryptophan from chorismate: step 1/5. Feedback inhibited by tryptophan. In terms of biological role, part of a heterotetrameric complex that catalyzes the two-step biosynthesis of anthranilate, an intermediate in the biosynthesis of L-tryptophan. In the first step, the glutamine-binding beta subunit (TrpG) of anthranilate synthase (AS) provides the glutamine amidotransferase activity which generates ammonia as a substrate that, along with chorismate, is used in the second step, catalyzed by the large alpha subunit of AS (TrpE) to produce anthranilate. In the absence of TrpG, TrpE can synthesize anthranilate directly from chorismate and high concentrations of ammonia. This chain is Anthranilate synthase component 1 (trpE), found in Bacillus caldotenax.